A 312-amino-acid polypeptide reads, in one-letter code: Ribonuclease Z (312 aa).

Histidine 63, histidine 65, aspartate 67, histidine 68, histidine 141, aspartate 212, and histidine 270 together coordinate Zn(2+). Aspartate 67 functions as the Proton acceptor in the catalytic mechanism.

It belongs to the RNase Z family. Homodimer. It depends on Zn(2+) as a cofactor.

The catalysed reaction is Endonucleolytic cleavage of RNA, removing extra 3' nucleotides from tRNA precursor, generating 3' termini of tRNAs. A 3'-hydroxy group is left at the tRNA terminus and a 5'-phosphoryl group is left at the trailer molecule.. Functionally, zinc phosphodiesterase, which displays some tRNA 3'-processing endonuclease activity. Probably involved in tRNA maturation, by removing a 3'-trailer from precursor tRNA. This Lactobacillus helveticus (strain DPC 4571) protein is Ribonuclease Z.